Consider the following 66-residue polypeptide: Large ribosomal subunit protein uL29 (66 aa).

This sequence belongs to the universal ribosomal protein uL29 family.

The protein is Large ribosomal subunit protein uL29 of Borrelia recurrentis (strain A1).